The following is a 490-amino-acid chain: Protein dead ringer homolog (490 aa).

Residues 1–33 show a composition bias toward basic and acidic residues; sequence MVEDQRRQLMEEEDEERRLILEEQRRRMMRADR. Disordered stretches follow at residues 1 to 77 and 106 to 135; these read MVED…AHID and ITQS…HGGS. Residues 34-50 show a composition bias toward acidic residues; the sequence is DEEEEEEEEEEEEEREE. The span at 51 to 76 shows a compositional bias: basic and acidic residues; sequence DDGRRSEDEMREDEPPGRRETSHAHI. A compositionally biased stretch (polar residues) spans 106–117; that stretch reads ITQSPPLTNGSN. The ARID domain occupies 202 to 294; sequence DSKRKEFLDD…YLYPYECEKK (93 aa). The interval 298–369 is disordered; the sequence is SPSELQSAID…PPRLSPSTSP (72 aa). A compositionally biased stretch (basic residues) spans 316–325; sequence PSYHSPHMHP. The REKLES domain occupies 389-479; it reads AAMLAELAER…GVLYPRGGTR (91 aa).

It localises to the nucleus. Transcription factor involved in skeletogenesis and oral ectoderm patterning. This chain is Protein dead ringer homolog (dri), found in Strongylocentrotus purpuratus (Purple sea urchin).